Consider the following 208-residue polypeptide: Glutathione S-transferase 2 (208 aa).

Residues methionine 1–glycine 78 enclose the GST N-terminal domain. Glutathione-binding positions include tyrosine 7, lysine 42, glutamine 49–leucine 50, and glutamine 62–serine 63. One can recognise a GST C-terminal domain in the interval asparagine 80–valine 200.

This sequence belongs to the GST superfamily. Pi family. In terms of assembly, homodimer. As to expression, hypodermis, wall of the seminal receptacle and spermatozoa of adult worms.

The enzyme catalyses RX + glutathione = an S-substituted glutathione + a halide anion + H(+). In terms of biological role, appears to play a central role in the parasite detoxification system. This is Glutathione S-transferase 2 (GST2) from Onchocerca volvulus.